Consider the following 95-residue polypeptide: Large ribosomal subunit protein uL23c (95 aa).

The protein belongs to the universal ribosomal protein uL23 family. As to quaternary structure, part of the 50S ribosomal subunit.

The protein resides in the plastid. It is found in the chloroplast. Functionally, binds to 23S rRNA. The sequence is that of Large ribosomal subunit protein uL23c (rpl23) from Guillardia theta (Cryptophyte).